A 549-amino-acid chain; its full sequence is uncharacterized protein (549 aa).

12 helical membrane-spanning segments follow: residues 1–21 (MEIF…GVVT), 28–48 (IPLP…TFGL), 50–70 (VEFD…FADG), 85–105 (IFGL…FLIY), 106–126 (WVVP…LSPT), 165–185 (FAVA…TVEF), 187–207 (KVAI…GRSL), 222–242 (IVLL…IGVS), 278–298 (LEFV…PGIL), 310–330 (NVEI…LMLV), 361–381 (ILIA…VLSI), and 398–418 (VFLA…MLPI).

The protein belongs to the monovalent cation:proton antiporter 1 (CPA1) transporter (TC 2.A.36) family.

The protein localises to the cell inner membrane. This is an uncharacterized protein from Escherichia coli (strain K12).